The primary structure comprises 183 residues: NAD(P)H-quinone oxidoreductase subunit J (183 aa).

The segment at 1–21 (MAEENAQEKQAPPSAGEQSEP) is disordered.

It belongs to the complex I 30 kDa subunit family. NDH-1 can be composed of about 15 different subunits; different subcomplexes with different compositions have been identified which probably have different functions.

It is found in the cellular thylakoid membrane. The catalysed reaction is a plastoquinone + NADH + (n+1) H(+)(in) = a plastoquinol + NAD(+) + n H(+)(out). The enzyme catalyses a plastoquinone + NADPH + (n+1) H(+)(in) = a plastoquinol + NADP(+) + n H(+)(out). Functionally, NDH-1 shuttles electrons from an unknown electron donor, via FMN and iron-sulfur (Fe-S) centers, to quinones in the respiratory and/or the photosynthetic chain. The immediate electron acceptor for the enzyme in this species is believed to be plastoquinone. Couples the redox reaction to proton translocation, and thus conserves the redox energy in a proton gradient. Cyanobacterial NDH-1 also plays a role in inorganic carbon-concentration. This is NAD(P)H-quinone oxidoreductase subunit J from Synechococcus sp. (strain JA-2-3B'a(2-13)) (Cyanobacteria bacterium Yellowstone B-Prime).